The chain runs to 198 residues: Tumor necrosis factor receptor superfamily member 22 (198 aa).

The Cytoplasmic portion of the chain corresponds to 1–20; that stretch reads MFGFFCSLVSSLSRWFLWRR. The helical; Signal-anchor for type II membrane protein transmembrane segment at 21–41 threads the bilayer; sequence LLLLLLLLLLNLPLQVKFAML. Over 42–198 the chain is Extracellular; it reads ELHSFKCPAG…SVVVFRIIRR (157 aa). TNFR-Cys repeat units follow at residues 47–82, 84–124, and 125–165; these read KCPA…QGQC, KCHP…DRKC, and QCRT…NTVC. 9 cysteine pairs are disulfide-bonded: Cys-48–Cys-59, Cys-60–Cys-73, Cys-63–Cys-82, Cys-85–Cys-100, Cys-103–Cys-116, Cys-106–Cys-124, Cys-126–Cys-141, Cys-144–Cys-157, and Cys-147–Cys-165. Asn-62 carries an N-linked (GlcNAc...) asparagine glycan. An N-linked (GlcNAc...) asparagine glycan is attached at Asn-158.

Ubiquitous.

Its subcellular location is the cell membrane. The protein resides in the secreted. Functionally, receptor for the cytotoxic ligand TNFSF10/TRAIL. Lacks a cytoplasmic death domain and hence is not capable of inducing apoptosis. Protects cells against TRAIL mediated apoptosis possibly through ligand competition. Cannot induce the NF-kappa-B pathway. In Mus musculus (Mouse), this protein is Tumor necrosis factor receptor superfamily member 22 (Tnfrsf22).